Reading from the N-terminus, the 391-residue chain is Multidrug resistance protein MdtL (391 aa).

12 helical membrane-spanning segments follow: residues 4–24 (FLIC…MYLV), 42–62 (IAFS…GKVA), 69–89 (PVAI…SLAE), 93–113 (LFLA…VVAF), 131–151 (LLNG…HLIM), 158–178 (SLFW…LFIL), 203–222 (FFLS…LTFV), 245–265 (ALTA…LGIF), 269–289 (TLMI…AVSP), 293–313 (VSLF…GVAM), 331–351 (LGIA…VVGI), and 356–376 (MLIG…MFVA).

The protein belongs to the major facilitator superfamily. DHA1 family. MdtL (TC 2.A.1.2.22) subfamily.

It is found in the cell inner membrane. Its function is as follows. Confers resistance to chloramphenicol. The polypeptide is Multidrug resistance protein MdtL (Escherichia coli (strain 55989 / EAEC)).